Here is a 402-residue protein sequence, read N- to C-terminus: Serine--glyoxylate aminotransferase (402 aa).

K201 is subject to N6-(pyridoxal phosphate)lysine.

The protein belongs to the class-V pyridoxal-phosphate-dependent aminotransferase family. The cofactor is pyridoxal 5'-phosphate.

It catalyses the reaction glyoxylate + L-serine = 3-hydroxypyruvate + glycine. It participates in one-carbon metabolism; formaldehyde assimilation via serine pathway. The polypeptide is Serine--glyoxylate aminotransferase (Methylorubrum extorquens (strain ATCC 14718 / DSM 1338 / JCM 2805 / NCIMB 9133 / AM1) (Methylobacterium extorquens)).